We begin with the raw amino-acid sequence, 347 residues long: MSQQYTLPVTLPPALSQEPLKPVSPPADTQQEQVKQATPLPAPCQKMLSELPVEVPLEDAEKHTTLVKGVPEQECEPQPQEPQQQELHVEQQQQQQESQVQELHVDQQQQQQESQEQELHVDQQQQQQESQEQELHVDQQQQQESQVQELHVGHHQQQQESQEQELHVDHHQQQQESQEQELHVDQQQQQQESQEQELHVDQQQQQQESQEQELHVDHHQQQQESQVQELHVDHQQQQQESQEQELHVDQHQQQQESQEQELHVDQQQQELQVQEVQQQQQQQQEQQEDHQKAEHLEQEEAQREQQLKGQLEQEKKGVYQHLDQELTKRDEHLEKKGEHCWSSRRSL.

2 disordered regions span residues 1 to 43 (MSQQ…LPAP) and 56 to 347 (PLED…RRSL). The segment covering 27–36 (ADTQQEQVKQ) has biased composition (polar residues). Low complexity-rich tracts occupy residues 70–114 (VPEQ…QQES) and 138–161 (DQQQQQESQVQELHVGHHQQQQES). 2 stretches are compositionally biased toward basic and acidic residues: residues 164 to 173 (QELHVDHHQQ) and 212 to 221 (QELHVDHHQQ). Composition is skewed to low complexity over residues 222–241 (QQESQVQELHVDHQQQQQES) and 265–285 (DQQQQELQVQEVQQQQQQQQE). A compositionally biased stretch (basic and acidic residues) spans 287 to 341 (QEDHQKAEHLEQEEAQREQQLKGQLEQEKKGVYQHLDQELTKRDEHLEKKGEHCW).

It belongs to the involucrin family. In terms of assembly, directly or indirectly cross-linked to cornifelin (CNFN). In terms of processing, substrate of transglutaminase. Specific glutamines or lysines are cross-linked to keratins, desmoplakin and to inter involucrin molecules. As to expression, keratinocytes of epidermis and other stratified squamous epithelia.

The protein resides in the cytoplasm. Part of the insoluble cornified cell envelope (CE) of stratified squamous epithelia. The chain is Involucrin (IVL) from Sus scrofa (Pig).